The sequence spans 108 residues: uncharacterized protein (108 aa).

Helical transmembrane passes span 32–52 and 68–88; these read YFFF…LLAI and SYLL…LVVG.

Its subcellular location is the membrane. This is an uncharacterized protein from Saccharomyces cerevisiae (strain ATCC 204508 / S288c) (Baker's yeast).